The primary structure comprises 453 residues: Secreted triacylglycerol lipase LIP3 (453 aa).

A signal peptide spans 1–19; that stretch reads MKLGIVAFTLISFAAQALA. N-linked (GlcNAc...) asparagine glycosylation is present at N98. Residues C115 and C284 are joined by a disulfide bond. Residue S197 is the Nucleophile of the active site. N-linked (GlcNAc...) asparagine glycosylation occurs at N230. Catalysis depends on residues D344 and H378. A disulfide bridge links C360 with C406.

Belongs to the AB hydrolase superfamily. Lipase family. Class Lip subfamily.

It localises to the secreted. Its subcellular location is the cell wall. The enzyme catalyses a triacylglycerol + H2O = a diacylglycerol + a fatty acid + H(+). It catalyses the reaction a monoacylglycerol + H2O = glycerol + a fatty acid + H(+). The catalysed reaction is a diacylglycerol + H2O = a monoacylglycerol + a fatty acid + H(+). Secreted lipase involved in Dandruff and seborrheic dermatitis (D/SD) probably via lipase-mediated breakdown of sebaceous lipids and release of irritating free fatty acids. Has triacylglycerol lipase activity and is able to hydrolyze triolein, tristearin, trilinolein, tripalmitoylglycerol and trihexadecenoin. Hydrolyzes diacylglycerols such as distearin, dilinolein, dipalmitoylglycerol and dipalmitolein. Mostly converts monoolein to di- and triolein, while free fatty acids are only produced in low amounts. The protein is Secreted triacylglycerol lipase LIP3 of Malassezia globosa (strain ATCC MYA-4612 / CBS 7966) (Dandruff-associated fungus).